The following is a 224-amino-acid chain: UPF0758 protein CV_3079 (224 aa).

The region spanning 102 to 224 (ALSSPQQVRD…AESFAERGWL (123 aa)) is the MPN domain. The Zn(2+) site is built by H173, H175, and D186. The JAMM motif motif lies at 173-186 (HNHPSGVSEPSSAD).

The protein belongs to the UPF0758 family.

The polypeptide is UPF0758 protein CV_3079 (Chromobacterium violaceum (strain ATCC 12472 / DSM 30191 / JCM 1249 / CCUG 213 / NBRC 12614 / NCIMB 9131 / NCTC 9757 / MK)).